The chain runs to 371 residues: Chaperone protein DnaJ (371 aa).

Residues 5–69 (DYYEVLGLSK…QKRAQYDQFG (65 aa)) enclose the J domain. A CR-type zinc finger spans residues 133-215 (GKELNVEIPV…CHGSGKVRKR (83 aa)). Residues Cys-146, Cys-149, Cys-163, Cys-166, Cys-189, Cys-192, Cys-203, and Cys-206 each coordinate Zn(2+). CXXCXGXG motif repeat units lie at residues 146 to 153 (CDTCKGSG), 163 to 170 (CKHCSGSG), 189 to 196 (CGHCSGTG), and 203 to 210 (CTTCHGSG).

It belongs to the DnaJ family. As to quaternary structure, homodimer. Requires Zn(2+) as cofactor.

It localises to the cytoplasm. In terms of biological role, participates actively in the response to hyperosmotic and heat shock by preventing the aggregation of stress-denatured proteins and by disaggregating proteins, also in an autonomous, DnaK-independent fashion. Unfolded proteins bind initially to DnaJ; upon interaction with the DnaJ-bound protein, DnaK hydrolyzes its bound ATP, resulting in the formation of a stable complex. GrpE releases ADP from DnaK; ATP binding to DnaK triggers the release of the substrate protein, thus completing the reaction cycle. Several rounds of ATP-dependent interactions between DnaJ, DnaK and GrpE are required for fully efficient folding. Also involved, together with DnaK and GrpE, in the DNA replication of plasmids through activation of initiation proteins. This chain is Chaperone protein DnaJ, found in Bacillus cereus (strain G9842).